A 180-amino-acid chain; its full sequence is NADH-quinone oxidoreductase subunit B (180 aa).

[4Fe-4S] cluster-binding residues include cysteine 59, cysteine 60, cysteine 124, and cysteine 154.

Belongs to the complex I 20 kDa subunit family. In terms of assembly, NDH-1 is composed of 14 different subunits. Subunits NuoB, C, D, E, F, and G constitute the peripheral sector of the complex. [4Fe-4S] cluster is required as a cofactor.

It is found in the cell inner membrane. The catalysed reaction is a quinone + NADH + 5 H(+)(in) = a quinol + NAD(+) + 4 H(+)(out). Functionally, NDH-1 shuttles electrons from NADH, via FMN and iron-sulfur (Fe-S) centers, to quinones in the respiratory chain. The immediate electron acceptor for the enzyme in this species is believed to be ubiquinone. Couples the redox reaction to proton translocation (for every two electrons transferred, four hydrogen ions are translocated across the cytoplasmic membrane), and thus conserves the redox energy in a proton gradient. The polypeptide is NADH-quinone oxidoreductase subunit B (Beijerinckia indica subsp. indica (strain ATCC 9039 / DSM 1715 / NCIMB 8712)).